An 888-amino-acid chain; its full sequence is Bifunctional lysine-specific demethylase and histidyl-hydroxylase NO66 (888 aa).

Disordered stretches follow at residues 83–157, 187–208, and 261–446; these read AAAK…GSFS, SNNS…DSDA, and NSTS…NKLS. The span at 98-108 shows a compositional bias: basic and acidic residues; that stretch reads REKNIAKKQPE. A compositionally biased stretch (polar residues) spans 116–139; sequence ENVQKQLENGQENNGTLINLSNGK. Residues 192–207 are compositionally biased toward acidic residues; that stretch reads FDFDSDGDSNDFDDSD. Basic and acidic residues predominate over residues 273–284; that stretch reads VEPRKAAKRNEP. A compositionally biased stretch (low complexity) spans 392-403; sequence KNKNNDNNNIDT. Positions 404 to 429 are enriched in basic and acidic residues; sequence NNKKDANNKKDANNNKDINNKKDANN. The segment covering 430–444 has biased composition (low complexity); sequence NKDTNNNKDNNNKNK. Positions 564 to 709 constitute a JmjC domain; sequence CSIRILNPST…NLLEVLMPSV (146 aa). Fe cation-binding residues include His-610, Asp-612, and His-675.

Belongs to the ROX family. NO66 subfamily. Fe(2+) serves as cofactor.

The protein localises to the nucleus. It catalyses the reaction N(6),N(6)-dimethyl-L-lysyl(36)-[histone H3] + 2 2-oxoglutarate + 2 O2 = L-lysyl(36)-[histone H3] + 2 formaldehyde + 2 succinate + 2 CO2. Functionally, oxygenase that can act as both a histone lysine demethylase and a ribosomal histidine hydroxylase. Specifically demethylates 'Lys-4' (H3K4me) and 'Lys-36' (H3K36me) of histone H3, thereby playing a central role in histone code. This is Bifunctional lysine-specific demethylase and histidyl-hydroxylase NO66 from Drosophila mojavensis (Fruit fly).